The chain runs to 689 residues: DNA-directed RNA polymerase subunit beta' (689 aa).

Zn(2+) contacts are provided by Cys-69, Cys-71, Cys-87, and Cys-90. Positions 489, 491, and 493 each coordinate Mg(2+).

The protein belongs to the RNA polymerase beta' chain family. RpoC1 subfamily. As to quaternary structure, in plastids the minimal PEP RNA polymerase catalytic core is composed of four subunits: alpha, beta, beta', and beta''. When a (nuclear-encoded) sigma factor is associated with the core the holoenzyme is formed, which can initiate transcription. Requires Mg(2+) as cofactor. It depends on Zn(2+) as a cofactor.

It is found in the plastid. The protein resides in the chloroplast. It carries out the reaction RNA(n) + a ribonucleoside 5'-triphosphate = RNA(n+1) + diphosphate. Its function is as follows. DNA-dependent RNA polymerase catalyzes the transcription of DNA into RNA using the four ribonucleoside triphosphates as substrates. The sequence is that of DNA-directed RNA polymerase subunit beta' from Lactuca sativa (Garden lettuce).